The chain runs to 287 residues: POU domain class 2-associating factor 2 (287 aa).

One can recognise an OCA domain in the interval 10 to 32; it reads KRVYQGVRVKHTVKDLLAEKRSR. Disordered stretches follow at residues 24–51, 161–199, and 247–279; these read DLLAEKRSRQTSNTRLNGSVSSSQPPFI, TVPDGLSQPDPMPADALQSLPPSTSCLSQLESGSSTQHR, and PKVGPLSPEEGSDVSSLHDPSPWTKEDGSMAWG. 2 stretches are compositionally biased toward polar residues: residues 33–49 and 180–199; these read QTSNTRLNGSVSSSQPP and LPPSTSCLSQLESGSSTQHR.

The protein belongs to the POU2AF family. As to quaternary structure, interacts with POU2F3 (via the POU domain) in a DNA-dependent manner; this interaction recruits POU2AF2 to chromatin and increases POU2F3 transactivation activity. As to expression, expressed in tuft cells of the small intestine, trachea, thymus, and colon.

Its subcellular location is the cytoplasm. The protein localises to the cytosol. It localises to the nucleus. Its function is as follows. Transcriptional coactivator of POU2F3. This complex drives the development of tuft cells, a rare chemosensory cells that coordinate immune and neural functions within mucosal epithelial tissues. In Mus musculus (Mouse), this protein is POU domain class 2-associating factor 2.